We begin with the raw amino-acid sequence, 330 residues long: L-asparaginase (330 aa).

The Asparaginase/glutaminase domain occupies 4–330 (PQVTILATGG…EAIQKIFSTY (327 aa)). Threonine 14 acts as the O-isoaspartyl threonine intermediate in catalysis. 93 to 94 (TD) contributes to the substrate binding site.

Belongs to the asparaginase 1 family. In terms of assembly, homotetramer.

Its subcellular location is the cytoplasm. The enzyme catalyses L-asparagine + H2O = L-aspartate + NH4(+). The protein is L-asparaginase (ansA) of Wolinella succinogenes (strain ATCC 29543 / DSM 1740 / CCUG 13145 / JCM 31913 / LMG 7466 / NCTC 11488 / FDC 602W) (Vibrio succinogenes).